Here is a 320-residue protein sequence, read N- to C-terminus: NAC domain-containing protein 20 (320 aa).

Residues 14 to 170 (LPPGFRFHPT…DWAVCRIFHK (157 aa)) enclose the NAC domain. Residues 114–176 (IGMKKTLVFY…IFHKSSGIKK (63 aa)) mediate DNA binding.

Forms homodimers. Forms heterodimers with NAC26. Expressed in developing seeds. Expressed in developing endosperm.

Its subcellular location is the nucleus. The protein localises to the endoplasmic reticulum. Functionally, transcription factor that acts redundantly with NAC26 to regulate the expression of genes involved in the biosynthesis of starch and storage proteins in grain. Directly binds to the promoters of starch synthase 1 (SS1), pullulanase (PUL), glutelin A1 (GLUA1), glutelins B4 and B5 (GLUB4 and GLUB5), alpha-globulin and 16 kDa prolamin, and activates their expression. The chain is NAC domain-containing protein 20 from Oryza sativa subsp. japonica (Rice).